The following is a 52-amino-acid chain: Large ribosomal subunit protein bL33A (52 aa).

Belongs to the bacterial ribosomal protein bL33 family.

The protein is Large ribosomal subunit protein bL33A of Staphylococcus aureus (strain USA300).